The sequence spans 465 residues: Tyrosine 3-monooxygenase (465 aa).

Positions 294, 299, and 339 each coordinate Fe cation.

This sequence belongs to the biopterin-dependent aromatic amino acid hydroxylase family. The cofactor is Fe(2+).

It localises to the cytoplasm. Its subcellular location is the perinuclear region. The catalysed reaction is (6R)-L-erythro-5,6,7,8-tetrahydrobiopterin + L-tyrosine + O2 = (4aS,6R)-4a-hydroxy-L-erythro-5,6,7,8-tetrahydrobiopterin + L-dopa. Its pathway is catecholamine biosynthesis; dopamine biosynthesis; dopamine from L-tyrosine: step 1/2. The polypeptide is Tyrosine 3-monooxygenase (TH) (Schistosoma mansoni (Blood fluke)).